Here is a 127-residue protein sequence, read N- to C-terminus: Large ribosomal subunit protein bL12 (127 aa).

A disordered region spans residues proline 98–lysine 127. Residues valine 105 to leucine 117 are compositionally biased toward basic and acidic residues.

It belongs to the bacterial ribosomal protein bL12 family. In terms of assembly, homodimer. Part of the ribosomal stalk of the 50S ribosomal subunit. Forms a multimeric L10(L12)X complex, where L10 forms an elongated spine to which 2 to 4 L12 dimers bind in a sequential fashion. Binds GTP-bound translation factors.

Functionally, forms part of the ribosomal stalk which helps the ribosome interact with GTP-bound translation factors. Is thus essential for accurate translation. The sequence is that of Large ribosomal subunit protein bL12 from Geobacter sulfurreducens (strain ATCC 51573 / DSM 12127 / PCA).